Consider the following 557-residue polypeptide: Protein NRT1/ PTR FAMILY 5.10 (557 aa).

2 helical membrane-spanning segments follow: residues 49–67 (FAYY…GPLG) and 79–99 (AWSG…DSFL). T104 carries the post-translational modification Phosphothreonine. Helical transmembrane passes span 105-125 (ILAA…SAMI), 144-164 (VITF…HKPC), 186-206 (SFFN…LWVL), 215-235 (WALG…VLLL), 320-340 (APIW…PTFF), 365-385 (FISL…IPIA), 401-421 (IGTG…VEMK), 443-463 (VWWL…AMVG), 479-499 (VGLA…SFMI), and 526-546 (YFYW…LYVA).

It belongs to the major facilitator superfamily. Proton-dependent oligopeptide transporter (POT/PTR) (TC 2.A.17) family. In terms of tissue distribution, expressed in shoots, roots and stems. Detected in leaves, flowers and siliques.

The protein resides in the membrane. The sequence is that of Protein NRT1/ PTR FAMILY 5.10 (NPF5.10) from Arabidopsis thaliana (Mouse-ear cress).